A 420-amino-acid polypeptide reads, in one-letter code: Pregnancy-associated glycoprotein 2 (420 aa).

A signal peptide spans 1-15; sequence MKWLVILGLVALSDC. N-linked (GlcNAc...) asparagine glycosylation is found at Asn56 and Asn79. Positions 76 to 417 constitute a Peptidase A1 domain; it reads YVGNISIGTP…DEGQNRIGLA (342 aa). The active site involves Asp94. Cystine bridges form between Cys107-Cys112 and Cys268-Cys272. The active site involves Asp277. Cysteines 341 and 376 form a disulfide.

The protein belongs to the peptidase A1 family. Expressed throughout the chorion, with the signal localized exclusively over the trophectoderm.

Its subcellular location is the secreted. The protein localises to the extracellular space. The sequence is that of Pregnancy-associated glycoprotein 2 (PAG2) from Sus scrofa (Pig).